We begin with the raw amino-acid sequence, 1105 residues long: Protein phosphatase 1 regulatory subunit 26 (1105 aa).

4 disordered regions span residues 228 to 382, 444 to 468, 504 to 526, and 589 to 748; these read LNDK…NKLA, QSTY…DSLV, TSPE…AKAM, and LNRG…DSDD. The span at 275-285 shows a compositional bias: basic and acidic residues; it reads LLRKHASDSKL. The span at 306–317 shows a compositional bias: low complexity; it reads TKTSSPSPKSTP. Over residues 359–368 the composition is skewed to polar residues; the sequence is SPTSANSLTH. Over residues 451–460 the composition is skewed to pro residues; sequence TEPPPPPPEP. Over residues 504 to 516 the composition is skewed to polar residues; the sequence is TSPELGSQSSKLS. The span at 602-612 shows a compositional bias: low complexity; the sequence is SYSSGDKSSSL. A compositionally biased stretch (basic residues) spans 628–647; sequence SKRKYKKRPKDGKSQCKKRV. The span at 686 to 701 shows a compositional bias: basic and acidic residues; the sequence is NSLEKSKKRREEKAVE. Over residues 705–715 the composition is skewed to polar residues; sequence PSCSSSPQGNK. Residues 733 to 742 show a composition bias toward basic and acidic residues; the sequence is RALDDAHESS.

The protein localises to the nucleus. It localises to the nucleolus. In terms of biological role, may inhibit phosphatase activity of protein phosphatase 1 (PP1) complexes. May positively regulate cell proliferation. This is Protein phosphatase 1 regulatory subunit 26 (ppp1r26) from Xenopus laevis (African clawed frog).